Here is a 217-residue protein sequence, read N- to C-terminus: Thiamine-phosphate synthase (217 aa).

4-amino-2-methyl-5-(diphosphooxymethyl)pyrimidine is bound by residues 39–43 (QYRDK) and asparagine 71. The Mg(2+) site is built by aspartate 72 and aspartate 91. Threonine 110 serves as a coordination point for 4-amino-2-methyl-5-(diphosphooxymethyl)pyrimidine. 137-139 (SHT) lines the 2-[(2R,5Z)-2-carboxy-4-methylthiazol-5(2H)-ylidene]ethyl phosphate pocket. Lysine 140 lines the 4-amino-2-methyl-5-(diphosphooxymethyl)pyrimidine pocket. Glycine 167 lines the 2-[(2R,5Z)-2-carboxy-4-methylthiazol-5(2H)-ylidene]ethyl phosphate pocket.

Belongs to the thiamine-phosphate synthase family. Requires Mg(2+) as cofactor.

The catalysed reaction is 2-[(2R,5Z)-2-carboxy-4-methylthiazol-5(2H)-ylidene]ethyl phosphate + 4-amino-2-methyl-5-(diphosphooxymethyl)pyrimidine + 2 H(+) = thiamine phosphate + CO2 + diphosphate. It catalyses the reaction 2-(2-carboxy-4-methylthiazol-5-yl)ethyl phosphate + 4-amino-2-methyl-5-(diphosphooxymethyl)pyrimidine + 2 H(+) = thiamine phosphate + CO2 + diphosphate. The enzyme catalyses 4-methyl-5-(2-phosphooxyethyl)-thiazole + 4-amino-2-methyl-5-(diphosphooxymethyl)pyrimidine + H(+) = thiamine phosphate + diphosphate. Its pathway is cofactor biosynthesis; thiamine diphosphate biosynthesis; thiamine phosphate from 4-amino-2-methyl-5-diphosphomethylpyrimidine and 4-methyl-5-(2-phosphoethyl)-thiazole: step 1/1. Its function is as follows. Condenses 4-methyl-5-(beta-hydroxyethyl)thiazole monophosphate (THZ-P) and 2-methyl-4-amino-5-hydroxymethyl pyrimidine pyrophosphate (HMP-PP) to form thiamine monophosphate (TMP). This chain is Thiamine-phosphate synthase, found in Alcanivorax borkumensis (strain ATCC 700651 / DSM 11573 / NCIMB 13689 / SK2).